Reading from the N-terminus, the 125-residue chain is L-fucose mutarotase (125 aa).

Catalysis depends on His-13, which acts as the Proton donor.

It belongs to the RbsD / FucU family. FucU mutarotase subfamily.

It catalyses the reaction alpha-L-fucose = beta-L-fucose. Its activity is regulated as follows. Active toward L-galactopyranoside and D-arabinopyranoside but no D-fucopyranoside activity detected. Plays a role in the catabolism of L-fucose. Involved in the anomeric conversion of L-fucose. The chain is L-fucose mutarotase from Xanthomonas campestris pv. campestris (strain ATCC 33913 / DSM 3586 / NCPPB 528 / LMG 568 / P 25).